The sequence spans 159 residues: U1 small nuclear ribonucleoprotein C (159 aa).

The Matrin-type zinc-finger motif lies at 4–36 (FYCDYCDTYLTHDSPSVRKTHCSGRKHKENVKD). The segment at 61 to 99 (KIPPTPFPGAPPPGGSLLPHPSIGGPPRPGMLPAPPMGG) is disordered. Composition is skewed to pro residues over residues 63–74 (PPTPFPGAPPPG) and 84–99 (GGPP…PMGG).

The protein belongs to the U1 small nuclear ribonucleoprotein C family. As to quaternary structure, component of the U1 snRNP. The U1 snRNP is composed of the U1 snRNA and the 7 core Sm proteins snrpb, snrpd1, snrpd2, snrpd3, snrpe, snrpf and snrpg that assemble in a heptameric protein ring on the Sm site of the small nuclear RNA to form the core snRNP, and at least 3 U1 snRNP-specific proteins snrnp70/U1-70K, snrpa/U1-A and snrpc/U1-C. snrpc/U1-C interacts with U1 snRNA and the 5' splice-site region of the pre-mRNA.

The protein localises to the nucleus. In terms of biological role, component of the spliceosomal U1 snRNP, which is essential for recognition of the pre-mRNA 5' splice-site and the subsequent assembly of the spliceosome. snrpc/U1-C is directly involved in initial 5' splice-site recognition for both constitutive and regulated alternative splicing. The interaction with the 5' splice-site seems to precede base-pairing between the pre-mRNA and the U1 snRNA. Stimulates commitment or early (E) complex formation by stabilizing the base pairing of the 5' end of the U1 snRNA and the 5' splice-site region. This Danio rerio (Zebrafish) protein is U1 small nuclear ribonucleoprotein C.